A 119-amino-acid polypeptide reads, in one-letter code: Large ribosomal subunit protein bL20 (119 aa).

Belongs to the bacterial ribosomal protein bL20 family.

Binds directly to 23S ribosomal RNA and is necessary for the in vitro assembly process of the 50S ribosomal subunit. It is not involved in the protein synthesizing functions of that subunit. The protein is Large ribosomal subunit protein bL20 (rplT) of Geobacillus stearothermophilus (Bacillus stearothermophilus).